The chain runs to 790 residues: Penicillin-binding protein 1A (790 aa).

Residues 1 to 20 (MANVRKRRKKKNEHKALRLT) lie on the Cytoplasmic side of the membrane. Residues 21 to 41 (FITLLMVFLFSCVAAAGVGLA) form a helical; Signal-anchor for type II membrane protein membrane-spanning segment. Residues 42-790 (MIKAAPPLDV…RKRKMIKPQI (749 aa)) are Extracellular-facing. Positions 61-230 (SVIYDDKNKL…PQSPSTFYNA (170 aa)) are transglycosylase. Glu-100 functions as the Proton donor; for transglycosylase activity in the catalytic mechanism. Residues 363–656 (ASVSIVDYKT…AALIWKLIMG (294 aa)) form a transpeptidase region. Ser-402 functions as the Acyl-ester intermediate; for transpeptidase activity in the catalytic mechanism. The tract at residues 720-790 (NKDKDDDDDD…RKRKMIKPQI (71 aa)) is disordered. Residues 724–740 (DDDDDDKDKDKEDEEEN) are compositionally biased toward acidic residues. The span at 741-779 (KDEKNEDKKEAKDNTKNKDKDKKKDNDRKIDMDKKPDSS) shows a compositional bias: basic and acidic residues. Over residues 780–790 (KRKRKMIKPQI) the composition is skewed to basic residues.

It in the N-terminal section; belongs to the glycosyltransferase 51 family. The protein in the C-terminal section; belongs to the transpeptidase family.

It localises to the cell membrane. It carries out the reaction [GlcNAc-(1-&gt;4)-Mur2Ac(oyl-L-Ala-gamma-D-Glu-L-Lys-D-Ala-D-Ala)](n)-di-trans,octa-cis-undecaprenyl diphosphate + beta-D-GlcNAc-(1-&gt;4)-Mur2Ac(oyl-L-Ala-gamma-D-Glu-L-Lys-D-Ala-D-Ala)-di-trans,octa-cis-undecaprenyl diphosphate = [GlcNAc-(1-&gt;4)-Mur2Ac(oyl-L-Ala-gamma-D-Glu-L-Lys-D-Ala-D-Ala)](n+1)-di-trans,octa-cis-undecaprenyl diphosphate + di-trans,octa-cis-undecaprenyl diphosphate + H(+). The enzyme catalyses Preferential cleavage: (Ac)2-L-Lys-D-Ala-|-D-Ala. Also transpeptidation of peptidyl-alanyl moieties that are N-acyl substituents of D-alanine.. It participates in cell wall biogenesis; peptidoglycan biosynthesis. Functionally, cell wall formation. Synthesis of cross-linked peptidoglycan from the lipid intermediates. The enzyme has a penicillin-insensitive transglycosylase N-terminal domain (formation of linear glycan strands) and a penicillin-sensitive transpeptidase C-terminal domain (cross-linking of the peptide subunits). The chain is Penicillin-binding protein 1A (pbpA) from Clostridium tetani (strain Massachusetts / E88).